Reading from the N-terminus, the 217-residue chain is Adenylate kinase (217 aa).

Position 10–15 (10–15) interacts with ATP; sequence GAGKGT. The segment at 30–59 is NMP; it reads STGEILRAAVKSKTPMGVKAKEYMDQGALV. Residues Thr31, Arg36, 57–59, 85–88, and Gln92 each bind AMP; these read ALV and GFPR. Residues 126-163 are LID; it reads GRRVCRACGRAFHVKFDPPLVDGVCDACGGELYQRDDD. Arg127 contributes to the ATP binding site. 4 residues coordinate Zn(2+): Cys130, Cys133, Cys150, and Cys153. Residues Arg160 and Arg171 each contribute to the AMP site. Glu199 contributes to the ATP binding site.

The protein belongs to the adenylate kinase family. As to quaternary structure, monomer.

The protein resides in the cytoplasm. The enzyme catalyses AMP + ATP = 2 ADP. It participates in purine metabolism; AMP biosynthesis via salvage pathway; AMP from ADP: step 1/1. Catalyzes the reversible transfer of the terminal phosphate group between ATP and AMP. Plays an important role in cellular energy homeostasis and in adenine nucleotide metabolism. The sequence is that of Adenylate kinase from Geobacter sulfurreducens (strain ATCC 51573 / DSM 12127 / PCA).